A 295-amino-acid chain; its full sequence is 4-hydroxy-tetrahydrodipicolinate synthase (295 aa).

T48 provides a ligand contact to pyruvate. Residue Y135 is the Proton donor/acceptor of the active site. The Schiff-base intermediate with substrate role is filled by K163. A pyruvate-binding site is contributed by V204.

Belongs to the DapA family. Homotetramer; dimer of dimers.

It localises to the cytoplasm. The catalysed reaction is L-aspartate 4-semialdehyde + pyruvate = (2S,4S)-4-hydroxy-2,3,4,5-tetrahydrodipicolinate + H2O + H(+). The protein operates within amino-acid biosynthesis; L-lysine biosynthesis via DAP pathway; (S)-tetrahydrodipicolinate from L-aspartate: step 3/4. In terms of biological role, catalyzes the condensation of (S)-aspartate-beta-semialdehyde [(S)-ASA] and pyruvate to 4-hydroxy-tetrahydrodipicolinate (HTPA). The sequence is that of 4-hydroxy-tetrahydrodipicolinate synthase from Francisella tularensis subsp. novicida (strain U112).